The following is a 1203-amino-acid chain: DNA-directed RNA polymerase subunit beta (1203 aa).

Residues 1174–1195 (AAQEAKAAFEAEEAEKATKAEA) are compositionally biased toward basic and acidic residues. Positions 1174–1203 (AAQEAKAAFEAEEAEKATKAEATEEAAEQE) are disordered.

This sequence belongs to the RNA polymerase beta chain family. The RNAP catalytic core consists of 2 alpha, 1 beta, 1 beta' and 1 omega subunit. When a sigma factor is associated with the core the holoenzyme is formed, which can initiate transcription.

The enzyme catalyses RNA(n) + a ribonucleoside 5'-triphosphate = RNA(n+1) + diphosphate. Functionally, DNA-dependent RNA polymerase catalyzes the transcription of DNA into RNA using the four ribonucleoside triphosphates as substrates. This is DNA-directed RNA polymerase subunit beta from Streptococcus pneumoniae (strain P1031).